The primary structure comprises 178 residues: MTKKEQALIEQYAKSLVEVASEHHSLDALQADVLAILETFVTTNLDQSLSSLAVPHAEKIKLLTLLKGNNSVYMNNFLNLILQNEREAYLYQMLQAVLNEIAIVSNQYDVTVTSSLPLTEEQKSRVRAVVAKKFAVTAGRLIEKVDPSLIGGFIISVNNKVIDTSIRRQLQAFKMNLK.

It belongs to the ATPase delta chain family. In terms of assembly, F-type ATPases have 2 components, F(1) - the catalytic core - and F(0) - the membrane proton channel. F(1) has five subunits: alpha(3), beta(3), gamma(1), delta(1), epsilon(1). F(0) has three main subunits: a(1), b(2) and c(10-14). The alpha and beta chains form an alternating ring which encloses part of the gamma chain. F(1) is attached to F(0) by a central stalk formed by the gamma and epsilon chains, while a peripheral stalk is formed by the delta and b chains.

The protein resides in the cell membrane. In terms of biological role, f(1)F(0) ATP synthase produces ATP from ADP in the presence of a proton or sodium gradient. F-type ATPases consist of two structural domains, F(1) containing the extramembraneous catalytic core and F(0) containing the membrane proton channel, linked together by a central stalk and a peripheral stalk. During catalysis, ATP synthesis in the catalytic domain of F(1) is coupled via a rotary mechanism of the central stalk subunits to proton translocation. This protein is part of the stalk that links CF(0) to CF(1). It either transmits conformational changes from CF(0) to CF(1) or is implicated in proton conduction. The chain is ATP synthase subunit delta from Streptococcus pyogenes serotype M49 (strain NZ131).